The following is a 212-amino-acid chain: MKWKEFIINETKQSYLKNIIKKINNIENHQVVFPLKKQRFRCFDFFDIEQTKVVILGQDPYHTPKIANGLCFSVDLGNNLPGSLINIFKALEYDLQIKRTNPDLSDWAKQGVLLLNTVLTVNAHQPNSHKNFGYEELIKNVFNELRKQKHVVYLLWGKQAMSYINLIDQKQNLILCASHPSPLSAHRGFLTCKHFSKCNDYLIKHLRTPIKW.

Asp-59 acts as the Proton acceptor in catalysis.

This sequence belongs to the uracil-DNA glycosylase (UDG) superfamily. UNG family.

The protein resides in the cytoplasm. The enzyme catalyses Hydrolyzes single-stranded DNA or mismatched double-stranded DNA and polynucleotides, releasing free uracil.. Functionally, excises uracil residues from the DNA which can arise as a result of misincorporation of dUMP residues by DNA polymerase or due to deamination of cytosine. This is Uracil-DNA glycosylase (ung) from Ureaplasma parvum serovar 3 (strain ATCC 700970).